We begin with the raw amino-acid sequence, 414 residues long: Tyrosine--tRNA ligase (414 aa).

Tyr35 lines the L-tyrosine pocket. Positions 40 to 49 match the 'HIGH' region motif; the sequence is PTADSLHVGH. Residues Tyr164 and Gln168 each coordinate L-tyrosine. Positions 226–230 match the 'KMSKS' region motif; sequence KFGKT. Lys229 contacts ATP. Positions 347–414 constitute an S4 RNA-binding domain; it reads TKVIDALVEL…KKKYFVILVK (68 aa).

It belongs to the class-I aminoacyl-tRNA synthetase family. TyrS type 1 subfamily. As to quaternary structure, homodimer.

The protein resides in the cytoplasm. The catalysed reaction is tRNA(Tyr) + L-tyrosine + ATP = L-tyrosyl-tRNA(Tyr) + AMP + diphosphate + H(+). In terms of biological role, catalyzes the attachment of tyrosine to tRNA(Tyr) in a two-step reaction: tyrosine is first activated by ATP to form Tyr-AMP and then transferred to the acceptor end of tRNA(Tyr). The protein is Tyrosine--tRNA ligase of Mycoplasma capricolum subsp. capricolum (strain California kid / ATCC 27343 / NCTC 10154).